Here is a 721-residue protein sequence, read N- to C-terminus: Peroxisomal fatty acid beta-oxidation multifunctional protein AIM1 (721 aa).

Glu-116 acts as the Nucleophile in catalysis. Catalysis depends on Glu-136, which acts as the Proton acceptor. Residues 719–721 carry the Microbody targeting signal motif; the sequence is SKL.

It in the N-terminal section; belongs to the enoyl-CoA hydratase/isomerase family. The protein in the central section; belongs to the 3-hydroxyacyl-CoA dehydrogenase family. As to expression, widely expressed.

Its subcellular location is the peroxisome. It catalyses the reaction a (3S)-3-hydroxyacyl-CoA = a (2E)-enoyl-CoA + H2O. It carries out the reaction a 4-saturated-(3S)-3-hydroxyacyl-CoA = a (3E)-enoyl-CoA + H2O. The catalysed reaction is (3S)-3-hydroxybutanoyl-CoA = (2E)-butenoyl-CoA + H2O. The enzyme catalyses (3S)-hydroxyoctanoyl-CoA = (2E)-octenoyl-CoA + H2O. It catalyses the reaction (3S)-3-hydroxydodecanoyl-CoA = (2E)-dodecenoyl-CoA + H2O. It carries out the reaction (3S)-hydroxytetradecanoyl-CoA = (2E)-tetradecenoyl-CoA + H2O. The catalysed reaction is (3S)-hydroxyhexanoyl-CoA = (2E)-hexenoyl-CoA + H2O. The enzyme catalyses a (3Z)-enoyl-CoA = a 4-saturated (2E)-enoyl-CoA. It catalyses the reaction a (3E)-enoyl-CoA = a 4-saturated (2E)-enoyl-CoA. It carries out the reaction (3S)-3-hydroxybutanoyl-CoA = (3R)-3-hydroxybutanoyl-CoA. The catalysed reaction is a (3S)-3-hydroxyacyl-CoA + NAD(+) = a 3-oxoacyl-CoA + NADH + H(+). The enzyme catalyses (3S)-3-hydroxybutanoyl-CoA + NAD(+) = acetoacetyl-CoA + NADH + H(+). It catalyses the reaction (3S)-hydroxyhexanoyl-CoA + NAD(+) = 3-oxohexanoyl-CoA + NADH + H(+). It carries out the reaction (3S)-hydroxyoctanoyl-CoA + NAD(+) = 3-oxooctanoyl-CoA + NADH + H(+). The catalysed reaction is (3S)-3-hydroxydodecanoyl-CoA + NAD(+) = 3-oxododecanoyl-CoA + NADH + H(+). The enzyme catalyses (3S)-hydroxytetradecanoyl-CoA + NAD(+) = 3-oxotetradecanoyl-CoA + NADH + H(+). Its pathway is lipid metabolism; fatty acid beta-oxidation. Functionally, involved in peroxisomal fatty acid beta-oxidation. Required for wound-induced jasmonate biosynthesis. Possesses enoyl-CoA hydratase activity against short chain substrates (C4-C6) and 3-hydroxyacyl-CoA dehydrogenase activity against chains of variable sizes (C6-C16). Possesses cinnamoyl-CoA hydratase activity and is involved in the peroxisomal beta-oxidation pathway for the biosynthesis of benzoic acid (BA). Required for the accumulation in seeds of benzoylated glucosinolates (BGs) and substituted hydroxybenzoylated choline esters, which are BA-containing secondary metabolites. Required for salicylic acid (SA) in seeds. The chain is Peroxisomal fatty acid beta-oxidation multifunctional protein AIM1 (AIM1) from Arabidopsis thaliana (Mouse-ear cress).